A 507-amino-acid chain; its full sequence is Probable allantoinase (507 aa).

Residues His105, His107, Lys195, His231, His294, and Asp368 each contribute to the Zn(2+) site. At Lys195 the chain carries N6-carboxylysine.

It belongs to the metallo-dependent hydrolases superfamily. Allantoinase family. Homotetramer. Zn(2+) is required as a cofactor. Carboxylation allows a single lysine to coordinate two zinc ions.

It catalyses the reaction (S)-allantoin + H2O = allantoate + H(+). It functions in the pathway nitrogen metabolism; (S)-allantoin degradation; allantoate from (S)-allantoin: step 1/1. Catalyzes the conversion of allantoin (5-ureidohydantoin) to allantoate by hydrolytic cleavage of the five-member hydantoin ring. Catalyzes the first step of the ureide allantoin degradation followed by the sequential activity of AAH, UGLYAH and UAH which allows a complete purine breakdown without the intermediate generation of urea. The protein is Probable allantoinase (ALN) of Oryza sativa subsp. japonica (Rice).